Consider the following 181-residue polypeptide: 28 kDa heat- and acid-stable phosphoprotein (181 aa).

Positions 1–14 (MPKGGRKGGHKGRA) are enriched in basic residues. Positions 1–117 (MPKGGRKGGH…SRREREEIEK (117 aa)) are disordered. At threonine 18 the chain carries Phosphothreonine. The residue at position 19 (serine 19) is a Phosphoserine. Residues 30–59 (EKQKAREEEEQKEGGDGAAGDPKKEKKSLD) show a composition bias toward basic and acidic residues. Lysine 52 participates in a covalent cross-link: Glycyl lysine isopeptide (Lys-Gly) (interchain with G-Cter in SUMO2). Phosphoserine occurs at positions 57, 60, and 63. Residues 60–69 (SDESEDEEDD) show a composition bias toward acidic residues. A Phosphotyrosine modification is found at tyrosine 70. A compositionally biased stretch (basic and acidic residues) spans 102–117 (DGPKELSRREREEIEK). N6-methyllysine is present on lysine 126. Residues lysine 132 and lysine 164 each carry the N6-acetyllysine modification. Residues 151–167 (EEAARKKEEERKAKDDA) are compositionally biased toward basic and acidic residues. Residues 151 to 181 (EEAARKKEEERKAKDDATLSGKRMQSLSLNK) are disordered. Residues serine 176 and serine 178 each carry the phosphoserine modification.

The protein belongs to the PDAP1 family.

Enhances PDGFA-stimulated cell growth in fibroblasts, but inhibits the mitogenic effect of PDGFB. This chain is 28 kDa heat- and acid-stable phosphoprotein (PDAP1), found in Homo sapiens (Human).